The following is a 331-amino-acid chain: GTPase Obg (331 aa).

The Obg domain maps to Met1–Leu159. Positions Ala160–Gly328 constitute an OBG-type G domain. Residues Gly166–Ser173, Phe191–Val195, Asp213–Gly216, Ser280–Glu283, and Ser309–Val311 contribute to the GTP site. Positions 173 and 193 each coordinate Mg(2+).

This sequence belongs to the TRAFAC class OBG-HflX-like GTPase superfamily. OBG GTPase family. Monomer. Mg(2+) serves as cofactor.

Its subcellular location is the cytoplasm. An essential GTPase which binds GTP, GDP and possibly (p)ppGpp with moderate affinity, with high nucleotide exchange rates and a fairly low GTP hydrolysis rate. Plays a role in control of the cell cycle, stress response, ribosome biogenesis and in those bacteria that undergo differentiation, in morphogenesis control. In Synechococcus sp. (strain RCC307), this protein is GTPase Obg.